We begin with the raw amino-acid sequence, 220 residues long: MHTLDGKKIVVASHNAGKLREFADLMGPFGFEAKSAKDYGLPEPDETGTTFEENAYIKALAAAKATGLPALSDDSGLCVDALDGAPGVYTANWAETPDGSRDFAMAMQRTEVALQEVGAASAEQRKGRFVAVICLAFPDGAAEYYRGEAEGTLVWPPRGELGFGYDPVFLPNGFDKTFGEMSAEEKHGWKPGQAAALSHRARAFQKFAQARLDLPRLGSA.

A substrate-binding site is contributed by 13–18 (SHNAGK). Mg(2+) contacts are provided by Asp-45 and Asp-74. Asp-74 (proton acceptor) is an active-site residue. Residues Ser-75, 163–166 (FGYD), Lys-186, and 199–200 (HR) contribute to the substrate site.

The protein belongs to the HAM1 NTPase family. As to quaternary structure, homodimer. Mg(2+) is required as a cofactor.

The catalysed reaction is XTP + H2O = XMP + diphosphate + H(+). It catalyses the reaction dITP + H2O = dIMP + diphosphate + H(+). It carries out the reaction ITP + H2O = IMP + diphosphate + H(+). Its function is as follows. Pyrophosphatase that catalyzes the hydrolysis of nucleoside triphosphates to their monophosphate derivatives, with a high preference for the non-canonical purine nucleotides XTP (xanthosine triphosphate), dITP (deoxyinosine triphosphate) and ITP. Seems to function as a house-cleaning enzyme that removes non-canonical purine nucleotides from the nucleotide pool, thus preventing their incorporation into DNA/RNA and avoiding chromosomal lesions. This chain is dITP/XTP pyrophosphatase, found in Mesorhizobium japonicum (strain LMG 29417 / CECT 9101 / MAFF 303099) (Mesorhizobium loti (strain MAFF 303099)).